The sequence spans 947 residues: Protocadherin alpha-4 (947 aa).

An N-terminal signal peptide occupies residues 1 to 29 (MEFSWGSGQESQRLLLSFLLLAIWEAGNS). 6 Cadherin domains span residues 30–133 (QIHY…PPRF), 134–242 (PTTQ…APVF), 243–350 (DRSL…VPEL), 351–455 (EFKS…APVF), 456–565 (AQPE…APTL), and 573–681 (SGGI…APSR). At 30–697 (QIHYSIPEEA…HSEASLVDVN (668 aa)) the chain is on the extracellular side. A disulfide bond links Cys96 and Cys102. N-linked (GlcNAc...) asparagine glycosylation is found at Asn257 and Asn265. An O-linked (Man) threonine glycan is attached at Thr438. Residues Ser440 and Ser442 are each glycosylated (O-linked (Man) serine). An N-linked (GlcNAc...) asparagine glycan is attached at Asn548. The chain crosses the membrane as a helical span at residues 698–718 (VYLIIAICAVSSLLVLTLLLY). The Cytoplasmic segment spans residues 719 to 947 (TALRCSTVPS…GNSTTDNSDQ (229 aa)). PXXP repeat units lie at residues 734–737 (PPKP), 774–777 (PSLS), 796–799 (PRQP), 829–832 (PGGP), 870–873 (PGNP), and 888–891 (PGSP). A 6 X 4 AA repeats of P-X-X-P region spans residues 734–891 (PPKPVMVCSS…PDKFIIPGSP (158 aa)). Positions 738–947 (VMVCSSAVGS…GNSTTDNSDQ (210 aa)) are required for interaction with FYN. Disordered regions lie at residues 761-805 (GEYP…DWRY) and 824-853 (ILRA…EVSP). Positions 891–947 (PAIISIRQEPANNQIDKSDFITFGKKEETKKKKKKKKGNKTQEKKEKGNSTTDNSDQ) are disordered. The segment covering 906 to 920 (DKSDFITFGKKEETK) has biased composition (basic and acidic residues).

Forms homodimers in trans (molecules expressed by two different cells). Forms promiscuous heterodimers in cis (at the plasma membrane of the same cell) with other protocadherins. Interacts with FYN. In terms of tissue distribution, detected in brain throughout embryonic development. Detected in adult brain, in particular in cerebellum and forebrain.

The protein resides in the cell membrane. Functionally, calcium-dependent cell-adhesion protein involved in cells self-recognition and non-self discrimination. Thereby, it is involved in the establishment and maintenance of specific neuronal connections in the brain. The polypeptide is Protocadherin alpha-4 (Mus musculus (Mouse)).